Here is a 376-residue protein sequence, read N- to C-terminus: tRNA-specific 2-thiouridylase MnmA (376 aa).

Residues 17 to 24 (GMSGGVDS) and Met-43 contribute to the ATP site. The interval 103 to 105 (NPD) is interaction with target base in tRNA. Catalysis depends on Cys-108, which acts as the Nucleophile. Cysteines 108 and 205 form a disulfide. ATP is bound at residue Gly-132. Positions 155 to 157 (KDQ) are interaction with tRNA. The active-site Cysteine persulfide intermediate is Cys-205. The segment at 315–316 (RY) is interaction with tRNA.

The protein belongs to the MnmA/TRMU family.

It is found in the cytoplasm. The enzyme catalyses S-sulfanyl-L-cysteinyl-[protein] + uridine(34) in tRNA + AH2 + ATP = 2-thiouridine(34) in tRNA + L-cysteinyl-[protein] + A + AMP + diphosphate + H(+). In terms of biological role, catalyzes the 2-thiolation of uridine at the wobble position (U34) of tRNA, leading to the formation of s(2)U34. The protein is tRNA-specific 2-thiouridylase MnmA of Dichelobacter nodosus (strain VCS1703A).